A 406-amino-acid polypeptide reads, in one-letter code: tRNA-specific 2-thiouridylase MnmA (406 aa).

ATP-binding positions include 6-13 (AMSGGVDS) and Leu32. Residue Cys101 is the Nucleophile of the active site. A disulfide bridge connects residues Cys101 and Cys193. Gly125 contacts ATP. The interaction with tRNA stretch occupies residues 143 to 145 (KDQ). Cys193 serves as the catalytic Cysteine persulfide intermediate. Positions 378–406 (GAPIEEQPAPGTVGAVDADAIEQGEDAQR) are disordered. The segment covering 396–406 (DAIEQGEDAQR) has biased composition (acidic residues).

The protein belongs to the MnmA/TRMU family.

The protein resides in the cytoplasm. It carries out the reaction S-sulfanyl-L-cysteinyl-[protein] + uridine(34) in tRNA + AH2 + ATP = 2-thiouridine(34) in tRNA + L-cysteinyl-[protein] + A + AMP + diphosphate + H(+). Functionally, catalyzes the 2-thiolation of uridine at the wobble position (U34) of tRNA, leading to the formation of s(2)U34. The chain is tRNA-specific 2-thiouridylase MnmA from Corynebacterium urealyticum (strain ATCC 43042 / DSM 7109).